Consider the following 342-residue polypeptide: tRNA N6-adenosine threonylcarbamoyltransferase (342 aa).

Fe cation is bound by residues His-111 and His-115. Residues 133–137, Asp-166, Gly-179, Asp-183, and Asn-273 contribute to the substrate site; that span reads AVSGG. Asp-301 serves as a coordination point for Fe cation.

This sequence belongs to the KAE1 / TsaD family. It depends on Fe(2+) as a cofactor.

The protein resides in the cytoplasm. It catalyses the reaction L-threonylcarbamoyladenylate + adenosine(37) in tRNA = N(6)-L-threonylcarbamoyladenosine(37) in tRNA + AMP + H(+). In terms of biological role, required for the formation of a threonylcarbamoyl group on adenosine at position 37 (t(6)A37) in tRNAs that read codons beginning with adenine. Is involved in the transfer of the threonylcarbamoyl moiety of threonylcarbamoyl-AMP (TC-AMP) to the N6 group of A37, together with TsaE and TsaB. TsaD likely plays a direct catalytic role in this reaction. In Syntrophotalea carbinolica (strain DSM 2380 / NBRC 103641 / GraBd1) (Pelobacter carbinolicus), this protein is tRNA N6-adenosine threonylcarbamoyltransferase.